A 227-amino-acid chain; its full sequence is uncharacterized protein (227 aa).

The next 5 helical transmembrane spans lie at A27–L47, P63–G83, T126–V146, V153–G173, and F186–A206.

It belongs to the DedA family.

It is found in the cell membrane. This is an uncharacterized protein from Mycobacterium tuberculosis (strain CDC 1551 / Oshkosh).